The primary structure comprises 712 residues: 1,4-alpha-glucan branching enzyme GlgB (712 aa).

D397 (nucleophile) is an active-site residue. Residue E450 is the Proton donor of the active site.

The protein belongs to the glycosyl hydrolase 13 family. GlgB subfamily. In terms of assembly, monomer.

It carries out the reaction Transfers a segment of a (1-&gt;4)-alpha-D-glucan chain to a primary hydroxy group in a similar glucan chain.. It participates in glycan biosynthesis; glycogen biosynthesis. Catalyzes the formation of the alpha-1,6-glucosidic linkages in glycogen by scission of a 1,4-alpha-linked oligosaccharide from growing alpha-1,4-glucan chains and the subsequent attachment of the oligosaccharide to the alpha-1,6 position. This Bradyrhizobium sp. (strain ORS 278) protein is 1,4-alpha-glucan branching enzyme GlgB.